The sequence spans 450 residues: Tryptophan dimethylallyltransferase 2 (450 aa).

L-tryptophan is bound by residues 80 to 81 (IL) and Glu-89. Arg-100, Lys-186, and Tyr-188 together coordinate substrate. Tyr-190 and Arg-251 together coordinate L-tryptophan. Residues Arg-264, Lys-266, Tyr-268, Gln-350, Tyr-352, Tyr-416, and Tyr-420 each coordinate substrate.

The protein belongs to the tryptophan dimethylallyltransferase family. Homodimer.

The catalysed reaction is L-tryptophan + dimethylallyl diphosphate = 4-(3-methylbut-2-enyl)-L-tryptophan + diphosphate. It participates in alkaloid biosynthesis; ergot alkaloid biosynthesis. In terms of biological role, catalyzes the first step of ergot alkaloid biosynthesis. Ergot alkaloids, which are produced by endophyte fungi, can enhance plant host fitness, but also cause livestock toxicosis to host plants. The polypeptide is Tryptophan dimethylallyltransferase 2 (dmaW2) (Epichloe coenophiala (Tall fescue endophyte fungus)).